The following is a 174-amino-acid chain: Anthrone oxygenase CPUR_05435 (174 aa).

Transmembrane regions (helical) follow at residues 13–33 (VALASGVFLSGAMFSVSAIMI), 56–76 (YGSVLMPSMSVAIAAVYGFAS), 88–108 (CLAAGALTLAIAPYTWLAMIP), and 140–160 (WVVLHSIRSILPLAGAIMGFT).

The protein belongs to the anthrone oxygenase family.

The protein resides in the membrane. The catalysed reaction is emodin anthrone + O2 = emodin + H2O + H(+). Anthrone oxygenase; part of the ergochrome gene cluster responsible for the typical purple-black color of the ergot sclerotia. The ergochrome gene cluster produces several ergot pigments including the yellow ergochrome secalonic acid and its derivatives, as well as the red anthraquinones endocrocin and clavorubin. The pathway begins with the synthesis of atrochrysone thioester by the polyketide synthase (PKS) CPUR_05437. The atrochrysone carboxyl ACP thioesterase CPUR_05436 then breaks the thioester bond and releases the atrochrysone carboxylic acid from CPUR_05437. The decarboxylase CPUR_05434 then catalyzes the concerted decarboxylation-elimination required to convert atochrysone carboxylic acid into emodin anthrone, which is further oxidized to emodin by the anthrone oxygenase CPUR_05435. Emodin is further modified to yield monodictyphenone via several steps involving CPUR_05427, CPUR_05428, CPUR_05429 and CPUR_05430. The short chain dehydrogenase/reductase CPUR_05418 then catalyzes the C-5 ketoreduction to give the xanthone skeleton of the monomeric units. Ergochromes formation requires further dimerization steps of different xanthone units, probably catalyzed by the cytochrome P450 monooxygenase CPUR_05419. CPUR_05425, CPUR_05426 and CPUR_05431 are unique to Claviceps, thus it is likely that they are involved in further modification of xanthone units or in their dimerization. The yellow ergochromes and the red anthraquinone pigments endocrocin and clavorubin are products from the same PKS derived precursors and the latter are likely shunt products in the pathway of xanthone biosynthesis. It is proposed that atrochrysone carboxylic acid released from the PKS CPUR_05437 can also be converted to endocrocin anthrone which is further oxidized into endocrocin by CPUR_05435. Endocrocin could be then modified to clavorubin, possibly by CPUR_05423 and CPUR_05431. Clavorubin is the principal anthraquinone metabolite produced by the cluster with a much higher yield compared to endocrocin. This chain is Anthrone oxygenase CPUR_05435, found in Claviceps purpurea (strain 20.1) (Ergot fungus).